The chain runs to 189 residues: Mercury resistance operon ORF3 (189 aa).

A signal peptide (tat-type signal) is located at residues 1 to 27 (MTSPSPTARRTRLRRRTALALAAAATA). The 152-residue stretch at 38 to 189 (TKANTPATRA…IQDALKKAGA (152 aa)) folds into the Thioredoxin domain.

Post-translationally, predicted to be exported by the Tat system. The position of the signal peptide cleavage has not been experimentally proven.

It is found in the secreted. In terms of biological role, probable mercury binding protein. This is Mercury resistance operon ORF3 from Streptomyces lividans.